Consider the following 46-residue polypeptide: Lariatin (46 aa).

A propeptide spanning residues 1-26 (MTSQPSKKTYNAPSLVQRGKFARTTA) is cleaved from the precursor. Residues 27 to 34 (GSQLVYRE) constitute a cross-link (isoglutamyl glycine isopeptide (Gly-Glu)).

The linear precursor LarA is probably cleaved by the putative peptidase LarD, generating linear 18-residue Lariatin-A or 20-residue Lariatin-B. These linear peptides are probably cross-linked by LarB. Finally, lariatins A and B may be exported by ABC transporter LarE.

Its function is as follows. Peptide antibiotic with selective activity against Mycobacterium species (M.smegmatis, MIC=3.13 ug/ml and M.tuberculosis, MIC=0.39 ug/ml). it is plausible that the target of lariatins lies within the cell wall in mycobacteria. Functionally, peptide antibiotic with selective activity against Mycobacterium species (M.smegmatis, MIC=6.25 ug/ml). The polypeptide is Lariatin (Rhodococcus jostii).